The sequence spans 655 residues: UvrABC system protein B (655 aa).

The 157-residue stretch at 25–181 (DGINKGEKEQ…IRKLVFMQYE (157 aa)) folds into the Helicase ATP-binding domain. 38-45 (GVTGSGKT) is an ATP binding site. The Beta-hairpin signature appears at 91–114 (YYDYYQPEAYVPRTDTFIDKESSV). The Helicase C-terminal domain occupies 428-590 (QVEDLLGEVK…IVPKTTKRAL (163 aa)). The UVR domain occupies 615–650 (RLLISDLENDMKEAAAKLDFERAASLRDQIATLKGL).

The protein belongs to the UvrB family. As to quaternary structure, forms a heterotetramer with UvrA during the search for lesions. Interacts with UvrC in an incision complex.

The protein localises to the cytoplasm. Functionally, the UvrABC repair system catalyzes the recognition and processing of DNA lesions. A damage recognition complex composed of 2 UvrA and 2 UvrB subunits scans DNA for abnormalities. Upon binding of the UvrA(2)B(2) complex to a putative damaged site, the DNA wraps around one UvrB monomer. DNA wrap is dependent on ATP binding by UvrB and probably causes local melting of the DNA helix, facilitating insertion of UvrB beta-hairpin between the DNA strands. Then UvrB probes one DNA strand for the presence of a lesion. If a lesion is found the UvrA subunits dissociate and the UvrB-DNA preincision complex is formed. This complex is subsequently bound by UvrC and the second UvrB is released. If no lesion is found, the DNA wraps around the other UvrB subunit that will check the other stand for damage. The chain is UvrABC system protein B from Methanobrevibacter smithii (strain ATCC 35061 / DSM 861 / OCM 144 / PS).